Reading from the N-terminus, the 442-residue chain is Galactose/N-acetylgalactosamine-binding lectin CEL-III (442 aa).

Residues 1–10 constitute a propeptide, removed in mature form; sequence MVSLVPCGFA. The residue at position 11 (glutamine 11) is a Pyrrolidone carboxylic acid. The has hemagglutinating activity towards rabbit erythrocytes, but no hemolytic activity towards them stretch occupies residues 11-304; the sequence is QVLCTNPLDI…DWEVPTATWN (294 aa). 3 cysteine pairs are disulfide-bonded: cysteine 14-cysteine 59, cysteine 31-cysteine 48, and cysteine 72-cysteine 88. D-galactose is bound by residues aspartate 19 and 33–36; that span reads DIVG. 2 consecutive Ricin B-type lectin domains span residues 28 to 102 and 115 to 245; these read SKQC…RWRL and EQVA…WSRP. The Ca(2+) site is built by aspartate 33, isoleucine 34, and glycine 36. The Mg(2+) site is built by asparagine 42 and isoleucine 43. Aspartate 49 contributes to the D-galactose binding site. Aspartate 53 provides a ligand contact to Ca(2+). Mg(2+) is bound by residues asparagine 82 and valine 83. Residues valine 117 and 131 to 134 contribute to the D-galactose site; that span reads DVEG. Cysteine 129 and cysteine 146 are disulfide-bonded. Residues aspartate 131, valine 132, and glycine 134 each contribute to the Ca(2+) site. Mg(2+) is bound at residue isoleucine 141. D-galactose is bound at residue 144-147; sequence YDCQ. Ca(2+) is bound by residues aspartate 151, aspartate 178, valine 179, and glycine 181. A disulfide bond links cysteine 176 and cysteine 193. 178–181 is a binding site for D-galactose; it reads DVEG. The Mg(2+) site is built by asparagine 187 and valine 188. Position 191–194 (191–194) interacts with D-galactose; sequence YSCE. Positions 198, 219, 220, and 222 each coordinate Ca(2+). Cysteines 217 and 234 form a disulfide. 219–222 contributes to the D-galactose binding site; that stretch reads DVEG. Asparagine 228 and valine 229 together coordinate Mg(2+). 232 to 235 is a D-galactose binding site; that stretch reads YRCD. Aspartate 239 contributes to the Ca(2+) binding site. 2 cysteine pairs are disulfide-bonded: cysteine 249/cysteine 254 and cysteine 264/cysteine 281. Residues 261 to 293 form the Ricin B-type lectin 3 domain; it reads SNKCLDVSGDQGTGDVGTWQCDGLPDQRFKWVF. Ca(2+)-binding residues include aspartate 266, valine 267, and glycine 269. 266–269 lines the D-galactose pocket; the sequence is DVSG. Residues aspartate 275 and valine 276 each contribute to the Mg(2+) site. Residues 279–282 and aspartate 286 each bind D-galactose; that span reads WQCD. Residue aspartate 286 participates in Ca(2+) binding. Residues 294–442 form a has a strong tendency to self-associate leading to formation of oligomers region; sequence DDWEVPTATW…NEDCTFCTDI (149 aa). 4 disulfide bridges follow: cysteine 308–cysteine 390, cysteine 377–cysteine 416, cysteine 425–cysteine 439, and cysteine 431–cysteine 436.

Oligomerizes in the human and rabbit erythrocyte membranes. Oligomerization is induced by binding of beta-1,4-linked disaccharide ligands such as lactose, lactulose, N-acetyllactosamine and phenyl-beta-D-galactoside, but only a little by N-acetylgalactosamine and galactose, and not at all by melibiose in aqueous solution in the presence of high salt concentration and pH 10. Forms heptamers that assemble into larger 21mer oligomers, which may be inserted as a transmembrane pore to the erythrocyte membrane. Ca(2+) is required as a cofactor. Requires Mg(2+) as cofactor. As to expression, expressed in body fluid (at protein level).

Its subcellular location is the secreted. Ca(2+) is required for hemolytic activity and the activity increases with increasing calcium concentration. Hemolytic activity is inhibited by N-acetylgalactosamine (GalNAc), lactose, lactulose, galactosamine, dextran with molecular masses greater than 4 kDa, to a lesser extent by inulin and only slightly by sucrose and melezitose, but not by glucose or mannose. The activity is abolished in the presence of 10 mM EDTA. Lactose-binding increases with increasing calcium concentration, but calcium has no effect on hemagglutinating activity. Cytotoxic effect on Madin-Darby canine kidney (MDCK) cell line is strongly inhibited by galactose, lactose and N-acetylgalactosamine (GalNAc), but not by raffinose, N-acetylglucosamine (GlcNAc), glucose, mannose, ribose or sucrose. Pore formation in artificial lactosyl ceramide (LacCer) or globotetraosylceramide (Gb4Cer) containing liposomes is strongly inhibited by lactose. In terms of biological role, galactose/N-acetylgalactosamine (Gal/GalNAc)-binding lectin with hemolytic activity. Favors saccharides that have a beta-1,4 linkage at the non-reducing end rather than saccharides having alpha-1,6 or alpha-1,4 linkages. Binds lactose, lactulose, GalNAc, galactosamine, methyl alpha-galactopyranoside, methyl beta-galactopyranoside, N-acetyllactosamine, p-nitrophenyl beta-D-galactopyranoside (pNP-Gal), p-nitrophenyl N-acetyl-beta-D-galactosaminide (pNP-GalNAc), asialofetuin, and human erythrocyte membrane lipids lactosyl ceramide (LacCer) and globoside globotetraosylceramide (Gb4Cer). Binds moderately to galactose, melibiose, raffinose, fucose, methyl alpha-galactoside and methyl beta-galactoside. Binds weakly to glucose, mannose and N-acetylglucosamine (GlcNAc). Has hemolytic activity towards human (A, B and O-type), rabbit and rat erythrocytes, but not towards mouse, chicken or horse erythrocytes. Forms ion-permeable transmembrane pores in the erythrocyte membrane as well as in artificial liposomes containing human erythrocyte membrane lipids LacCer, Gb4Cer and galactosyl ceramide (GalCer) leading to destruction of the membrane. Has hemagglutinating activity towards rabbit, human and rat erythrocytes, and at relatively high concentrations towards chicken and horse erythrocytes, but not towards mouse erythrocytes. Has dose-dependent cytotoxic effect on Madin-Darby canine kidney (MDCK), African green monkey kidney (Vero) and human epithelia carcinoma (HeLa) cell lines, but Chinese hamster ovary (CHO), rat sarcoma (XC) and potoroo rat kangaroo kidney (PtK1) cells are highly resistant to the cytotoxic effect of this protein. Impairs malaria parasite development in malaria parasite infected transgenic A.stephensi mosquitoes expressing this protein specifically in their midguts. Binds to ookinetes and leads to strong dose-dependent inhibition of ookinete formation in vitro. Leads to severely impaired oocyst formation and significantly reduced sporozoite production of rodent malaria parasite P.berghei in the salivary glands of the transgenic mosquitoes. The parasite transmission to uninfected mice (vectorial competence) of these mosquitoes is significantly impaired. Also leads to severely impaired oocyst formation of human malaria parasite P.falciparum in transgenic mosquitoes fed on mature P.falciparum gametocyte cultures. May be involved in defense mechanisms acting as a toxic protein to foreign microorganisms. May act in defense against predators. This is Galactose/N-acetylgalactosamine-binding lectin CEL-III from Pseudocnus echinatus (Sea cucumber).